The primary structure comprises 139 residues: uncharacterized protein (139 aa).

The disordered stretch occupies residues 54–75 (NSLHRHGDQAWGKHRRQNSLKS).

This is an uncharacterized protein from Homo sapiens (Human).